The chain runs to 143 residues: Large-conductance mechanosensitive channel (143 aa).

The next 3 membrane-spanning stretches (helical) occupy residues 21–41 (VGVI…ADII), 44–64 (VVGL…LGTV), and 86–106 (GNFI…FMMV).

It belongs to the MscL family. In terms of assembly, homopentamer.

The protein resides in the cell inner membrane. Its function is as follows. Channel that opens in response to stretch forces in the membrane lipid bilayer. May participate in the regulation of osmotic pressure changes within the cell. The chain is Large-conductance mechanosensitive channel from Variovorax paradoxus (strain S110).